Consider the following 496-residue polypeptide: Probable malate:quinone oxidoreductase (496 aa).

Belongs to the MQO family. It depends on FAD as a cofactor.

It catalyses the reaction (S)-malate + a quinone = a quinol + oxaloacetate. The protein operates within carbohydrate metabolism; tricarboxylic acid cycle; oxaloacetate from (S)-malate (quinone route): step 1/1. This chain is Probable malate:quinone oxidoreductase, found in Prochlorococcus marinus (strain NATL1A).